Here is a 264-residue protein sequence, read N- to C-terminus: Shikimate dehydrogenase (NADP(+)) (264 aa).

Shikimate-binding positions include 14–16 (SLS) and threonine 59. Catalysis depends on lysine 63, which acts as the Proton acceptor. Glutamate 75 lines the NADP(+) pocket. Positions 84 and 99 each coordinate shikimate. NADP(+) contacts are provided by residues 122 to 126 (GAGGA), 144 to 149 (NRTPSK), and isoleucine 205. Tyrosine 207 is a binding site for shikimate. NADP(+) is bound at residue glycine 228.

Belongs to the shikimate dehydrogenase family. In terms of assembly, homodimer.

It catalyses the reaction shikimate + NADP(+) = 3-dehydroshikimate + NADPH + H(+). The protein operates within metabolic intermediate biosynthesis; chorismate biosynthesis; chorismate from D-erythrose 4-phosphate and phosphoenolpyruvate: step 4/7. Its function is as follows. Involved in the biosynthesis of the chorismate, which leads to the biosynthesis of aromatic amino acids. Catalyzes the reversible NADPH linked reduction of 3-dehydroshikimate (DHSA) to yield shikimate (SA). This Pyrococcus abyssi (strain GE5 / Orsay) protein is Shikimate dehydrogenase (NADP(+)).